A 371-amino-acid chain; its full sequence is Diterpene cyclase DtcycA (371 aa).

Residues Asn234, Ser238, and Glu242 each contribute to the Mg(2+) site.

It belongs to the terpene synthase family. In terms of assembly, homodimer. Mg(2+) serves as cofactor.

The catalysed reaction is (2E,6E,10E)-geranylgeranyl diphosphate = cembrene C + diphosphate. It carries out the reaction (2E,6E,10E)-geranylgeranyl diphosphate + H2O = (R)-nephthenol + diphosphate. Diterpene cyclases that can form multiple diterpene products. This Streptomyces sp protein is Diterpene cyclase DtcycA.